Here is a 331-residue protein sequence, read N- to C-terminus: MIFSVDVMGFENDIREAINACRDFCKKNSDVKIILVGDKERIQKEIKSSDNFEIVHASEEIKMTDDPISIRKKTNSSMYKAIELVKENKADGVLSAGNTSCYVFLTFLILGKIPGITKCGFMPYMPTINGRGVNFLDVGANKECDATDLVNFARMGSIYIEKVRNVKNPKVGILNIGTEDNKGLSYHIEANKILKDVKNINYVGFVESRYLLEEKVDLIVSDGFVGNIALKALEGTFKTVLRSLLGTRKKPLFGWLWFLLSIPNLLTIKNKYDYKNNAGAIVLGLNKIAIKTHGSADYKQFYSSLRLLRDTVKADLINILKREFEKDNEGQ.

It belongs to the PlsX family. As to quaternary structure, homodimer. Probably interacts with PlsY.

The protein localises to the cytoplasm. The enzyme catalyses a fatty acyl-[ACP] + phosphate = an acyl phosphate + holo-[ACP]. Its pathway is lipid metabolism; phospholipid metabolism. Functionally, catalyzes the reversible formation of acyl-phosphate (acyl-PO(4)) from acyl-[acyl-carrier-protein] (acyl-ACP). This enzyme utilizes acyl-ACP as fatty acyl donor, but not acyl-CoA. The protein is Phosphate acyltransferase of Malacoplasma penetrans (strain HF-2) (Mycoplasma penetrans).